Reading from the N-terminus, the 200-residue chain is Ras-related protein RABF2a (200 aa).

17-25 (GDVGAGKSS) lines the GTP pocket. Residues 39-47 (QESTIGAAF) carry the Effector region motif. GTP is bound by residues 65 to 69 (DTAGQ), 123 to 126 (NKAD), and 153 to 154 (SA). Residues C198 and C199 are each lipidated (S-geranylgeranyl cysteine).

The protein belongs to the small GTPase superfamily. Rab family. Interacts with VPS9A. Interacts with EREX (via PX domain). Binds to VPS3. As to expression, high in stem, root, and inflorescence.

The protein localises to the endosome membrane. It localises to the prevacuolar compartment membrane. Its function is as follows. Involved in the trafficking of soluble cargo proteins from the prevacuolar compartment to the central vacuole. Involved in vacuolar transport of storage proteins with EREX as effector. Regulates membrane trafficking to protein storage vacuoles (PSVs). The protein is Ras-related protein RABF2a (RABF2A) of Arabidopsis thaliana (Mouse-ear cress).